The sequence spans 213 residues: MKVLITGFDPFGGESINPALEAVKMIPENIEGAQVIKLEIPTVFRKSLEKIEEKIEEINPDVVISIGQAGGRFGVTPERVAINMDDARIEDNEGNQPIDISIYEDGESAYFSNLPIKAMVKEMVDNGIPASVSNTAGTFVCNHVMYGVLYLVNKKYKNIRAGFIHVPYIPTQVVNKPNTPSMSINDIAKGLELSIKAIVLNDNDIKTVGGAVC.

Residues E78, C141, and H165 contribute to the active site.

This sequence belongs to the peptidase C15 family. In terms of assembly, homotetramer.

The protein resides in the cytoplasm. The enzyme catalyses Release of an N-terminal pyroglutamyl group from a polypeptide, the second amino acid generally not being Pro.. Removes 5-oxoproline from various penultimate amino acid residues except L-proline. The polypeptide is Pyrrolidone-carboxylate peptidase (Clostridium perfringens (strain ATCC 13124 / DSM 756 / JCM 1290 / NCIMB 6125 / NCTC 8237 / Type A)).